The primary structure comprises 127 residues: Fluoride-specific ion channel FluC (127 aa).

4 consecutive transmembrane segments (helical) span residues serine 4 to leucine 24, glycine 36 to alanine 56, leucine 68 to valine 88, and alanine 99 to phenylalanine 119. Na(+)-binding residues include glycine 75 and threonine 78.

Belongs to the fluoride channel Fluc/FEX (TC 1.A.43) family.

The protein resides in the cell inner membrane. It catalyses the reaction fluoride(in) = fluoride(out). Its activity is regulated as follows. Na(+) is not transported, but it plays an essential structural role and its presence is essential for fluoride channel function. Fluoride-specific ion channel. Important for reducing fluoride concentration in the cell, thus reducing its toxicity. In Pseudomonas paraeruginosa (strain DSM 24068 / PA7) (Pseudomonas aeruginosa (strain PA7)), this protein is Fluoride-specific ion channel FluC.